The sequence spans 436 residues: Xylose isomerase (436 aa).

Active-site residues include His100 and Asp103. Residues Glu231, Glu267, His270, Asp295, Asp306, Asp308, and Asp338 each coordinate Mg(2+).

The protein belongs to the xylose isomerase family. As to quaternary structure, homotetramer. Requires Mg(2+) as cofactor.

The protein localises to the cytoplasm. The enzyme catalyses alpha-D-xylose = alpha-D-xylulofuranose. This chain is Xylose isomerase, found in Ruegeria sp. (strain TM1040) (Silicibacter sp.).